Consider the following 188-residue polypeptide: MSRQTTIPLRERNIILIGFMGAGKTTIGQLVAKKLYRDFIDVDAEIERRQGMSIPELFAQKGEAYFRKVERELIVDLCTNTRLKILSLGGGAYLQEDVRRACLAHGIVFFLDLSWEHWKEERLPLIVDSRPVLKNKTLEEVEQLFFQRQSAYALHHSRVVLNELEAEQAAEQIVESIKWTWDVYEPNR.

ATP is bound at residue 21-26; that stretch reads GAGKTT. Thr25 contributes to the Mg(2+) binding site. Substrate is bound by residues Asp43, Arg67, and Gly90. Residue Arg130 coordinates ATP. Arg148 lines the substrate pocket.

The protein belongs to the shikimate kinase family. As to quaternary structure, monomer. It depends on Mg(2+) as a cofactor.

The protein localises to the cytoplasm. The enzyme catalyses shikimate + ATP = 3-phosphoshikimate + ADP + H(+). It participates in metabolic intermediate biosynthesis; chorismate biosynthesis; chorismate from D-erythrose 4-phosphate and phosphoenolpyruvate: step 5/7. In terms of biological role, catalyzes the specific phosphorylation of the 3-hydroxyl group of shikimic acid using ATP as a cosubstrate. The polypeptide is Shikimate kinase (Geobacillus kaustophilus (strain HTA426)).